The sequence spans 499 residues: ADP,ATP carrier protein 5 (499 aa).

11 consecutive transmembrane segments (helical) span residues 25-45 (LGKF…QNIL), 61-81 (IAGF…VIIY), 93-113 (IFYY…FVIY), 148-168 (YIVY…LLFW), 183-203 (FYTF…FLMM), 223-243 (ITLV…CCVL), 286-306 (LWLL…VEAV), 327-347 (LYIL…NNVM), 356-376 (AVIS…LIVF), 380-400 (ILSL…VSIG), and 468-488 (SISP…IYAV).

This sequence belongs to the ADP/ATP translocase tlc family.

It is found in the cell membrane. Functionally, provides the rickettsial cell with host ATP in exchange for rickettsial ADP. This is an obligate exchange system. This energy acquiring activity is an important component of rickettsial parasitism. This Rickettsia felis (strain ATCC VR-1525 / URRWXCal2) (Rickettsia azadi) protein is ADP,ATP carrier protein 5 (tlcE).